The following is a 119-amino-acid chain: MPRVKRGVTARARHKKVLVQAKGYRGRRKNVYRIAKQAVMKAGQYQYRDRRQRKRQFRSLWIARINAAARELGMKYSTFMNGLKKANIEVDRKVLADLAVFDQPAFAALAAQAKAQLGA.

The protein belongs to the bacterial ribosomal protein bL20 family.

Binds directly to 23S ribosomal RNA and is necessary for the in vitro assembly process of the 50S ribosomal subunit. It is not involved in the protein synthesizing functions of that subunit. The protein is Large ribosomal subunit protein bL20 of Dechloromonas aromatica (strain RCB).